The primary structure comprises 358 residues: Gentisate 1,2-dioxygenase (358 aa).

The Cupin type-2 domain maps to 99-165 (QYLGPREVAP…VTDEPMAWLD (67 aa)). Residues 185–215 (DELSTRETPERSRGERLWGHPGLRPIGRPDQ) form a disordered region. A compositionally biased stretch (basic and acidic residues) spans 187–202 (LSTRETPERSRGERLW).

The protein belongs to the gentisate 1,2-dioxygenase family.

It catalyses the reaction 2,5-dihydroxybenzoate + O2 = 3-maleylpyruvate + H(+). Its function is as follows. Involved in the degradation of salicylate via a pathway involving coenzyme A derivative. Catalyzes the oxygen-dependent ring fission of gentisate between the carboxyl and proximal hydroxyl groups at positions 1 and 2 of the aromatic ring to form maleylpyruvate. The substrate specificity is strong, since salicylate, catechol, protocatechuic acid, homogenetisate, 2,3-dihydroxybenzoate or 5-aminosalicylate cannot substitute for gentisate in the ring cleavage reaction. The protein is Gentisate 1,2-dioxygenase of Streptomyces sp.